A 205-amino-acid chain; its full sequence is Ypt/Rab-type GTPase Rab7 (205 aa).

GTP contacts are provided by residues Ser17–Ser23, Phe33–Thr40, Gly66, Asn125–Asp128, and Ser157–Lys159. The short motif at Tyr37–Phe45 is the Effector region element. Residues Cys203 and Cys205 are each lipidated (S-geranylgeranyl cysteine). Cysteine methyl ester is present on Cys205.

Belongs to the small GTPase superfamily. Rab family.

It localises to the cell membrane. Its activity is regulated as follows. Alternates between an inactive form bound to GDP and an active form bound to GTP. Activated by guanine nucleotide-exchange factors (GEFs), and inactivated by GTPase-activating proteins (GAPs). Functionally, ypt/Rab-type GTPases are key regulators of membrane trafficking and intracellular vesicular transport. They act as molecular switches that convert between GTP-bound and GDP-bound states, and regulate virtually all steps of membrane traffic from the formation of the transport vesicle at the donor membrane to its fusion at the target membrane. In the GDP-bound state, Ypt proteins are predominantly cytosolic, solubilized through the interaction with a GDP dissociation inhibitor (GDI). In the GTP-bound state, the proteins are membrane bound and interact with specific effector proteins that select cargo, promote vesicle movement, or verify the correct site of fusion. This is Ypt/Rab-type GTPase Rab7 (gtp-14) from Neurospora crassa (strain ATCC 24698 / 74-OR23-1A / CBS 708.71 / DSM 1257 / FGSC 987).